Consider the following 31-residue polypeptide: Cytochrome b6-f complex subunit 6 (31 aa).

A helical transmembrane segment spans residues 4 to 24; sequence ITSYFGFLLVALTITSALFIG.

The protein belongs to the PetL family. The 4 large subunits of the cytochrome b6-f complex are cytochrome b6, subunit IV (17 kDa polypeptide, PetD), cytochrome f and the Rieske protein, while the 4 small subunits are PetG, PetL, PetM and PetN. The complex functions as a dimer.

Its subcellular location is the plastid. The protein localises to the chloroplast thylakoid membrane. Component of the cytochrome b6-f complex, which mediates electron transfer between photosystem II (PSII) and photosystem I (PSI), cyclic electron flow around PSI, and state transitions. PetL is important for photoautotrophic growth as well as for electron transfer efficiency and stability of the cytochrome b6-f complex. The protein is Cytochrome b6-f complex subunit 6 of Panax ginseng (Korean ginseng).